We begin with the raw amino-acid sequence, 156 residues long: Ribosomal RNA large subunit methyltransferase H (156 aa).

S-adenosyl-L-methionine is bound by residues Leu-73, Gly-104, and 123–128 (VSSLTL).

It belongs to the RNA methyltransferase RlmH family. Homodimer.

The protein localises to the cytoplasm. It carries out the reaction pseudouridine(1915) in 23S rRNA + S-adenosyl-L-methionine = N(3)-methylpseudouridine(1915) in 23S rRNA + S-adenosyl-L-homocysteine + H(+). Functionally, specifically methylates the pseudouridine at position 1915 (m3Psi1915) in 23S rRNA. The chain is Ribosomal RNA large subunit methyltransferase H from Burkholderia mallei (strain NCTC 10247).